We begin with the raw amino-acid sequence, 489 residues long: Glycogen synthase (489 aa).

Residue Lys-15 coordinates ADP-alpha-D-glucose.

The protein belongs to the glycosyltransferase 1 family. Bacterial/plant glycogen synthase subfamily.

The enzyme catalyses [(1-&gt;4)-alpha-D-glucosyl](n) + ADP-alpha-D-glucose = [(1-&gt;4)-alpha-D-glucosyl](n+1) + ADP + H(+). It participates in glycan biosynthesis; glycogen biosynthesis. Functionally, synthesizes alpha-1,4-glucan chains using ADP-glucose. The protein is Glycogen synthase of Francisella tularensis subsp. novicida (strain U112).